We begin with the raw amino-acid sequence, 100 residues long: Nucleoid-associated protein Caur_0522 (100 aa).

The protein belongs to the YbaB/EbfC family. Homodimer.

The protein resides in the cytoplasm. It localises to the nucleoid. Its function is as follows. Binds to DNA and alters its conformation. May be involved in regulation of gene expression, nucleoid organization and DNA protection. This is Nucleoid-associated protein Caur_0522 from Chloroflexus aurantiacus (strain ATCC 29366 / DSM 635 / J-10-fl).